Consider the following 141-residue polypeptide: Metallothiol transferase FosB (141 aa).

The VOC domain occupies 5 to 120 (SINHLLFSVS…DGHKFEFHTG (116 aa)). The Mg(2+) site is built by histidine 8, histidine 67, and glutamate 116. Glutamate 116 functions as the Proton donor/acceptor in the catalytic mechanism.

It belongs to the fosfomycin resistance protein family. FosB subfamily. In terms of assembly, homodimer. It depends on Mg(2+) as a cofactor.

It localises to the cytoplasm. In terms of biological role, metallothiol transferase which confers resistance to fosfomycin by catalyzing the addition of a thiol cofactor to fosfomycin. L-cysteine is probably the physiological thiol donor. The polypeptide is Metallothiol transferase FosB (Lysinibacillus sphaericus (strain C3-41)).